Consider the following 289-residue polypeptide: 4-hydroxy-tetrahydrodipicolinate synthase (289 aa).

Thr-43 serves as a coordination point for pyruvate. The active-site Proton donor/acceptor is the Tyr-131. The active-site Schiff-base intermediate with substrate is Lys-160. Ile-200 contacts pyruvate.

It belongs to the DapA family. In terms of assembly, homotetramer; dimer of dimers.

It is found in the cytoplasm. It catalyses the reaction L-aspartate 4-semialdehyde + pyruvate = (2S,4S)-4-hydroxy-2,3,4,5-tetrahydrodipicolinate + H2O + H(+). It functions in the pathway amino-acid biosynthesis; L-lysine biosynthesis via DAP pathway; (S)-tetrahydrodipicolinate from L-aspartate: step 3/4. Catalyzes the condensation of (S)-aspartate-beta-semialdehyde [(S)-ASA] and pyruvate to 4-hydroxy-tetrahydrodipicolinate (HTPA). This Methanococcus vannielii (strain ATCC 35089 / DSM 1224 / JCM 13029 / OCM 148 / SB) protein is 4-hydroxy-tetrahydrodipicolinate synthase.